A 424-amino-acid polypeptide reads, in one-letter code: Spermatogenesis-associated protein 2-like protein (424 aa).

Disordered regions lie at residues 233–258 (EDEG…AELA) and 273–300 (TGGR…EEGL). Ser327 is subject to Phosphoserine.

This sequence belongs to the SPATA2 family.

This is Spermatogenesis-associated protein 2-like protein from Homo sapiens (Human).